The sequence spans 397 residues: Protein WRKY1 (397 aa).

Residues 326-392 (KVADIPADEF…YEGDHNHNRV (67 aa)) constitute a DNA-binding region (WRKY).

This sequence belongs to the WRKY group II-d family. In terms of assembly, interacts with RS2. As to expression, more abundant in apices and young leaf primordia than in fully expanded leaf tissues.

Its subcellular location is the nucleus. Functionally, transcription factor. Interacts specifically with the W box (5'-(T)TGAC[CT]-3'), a frequently occurring elicitor-responsive cis-acting element. The protein is Protein WRKY1 of Zea mays (Maize).